The sequence spans 213 residues: Negative modulator of initiation of replication (213 aa).

Interaction with DNA regions lie at residues 116 to 117 (AV), 145 to 149 (RTRVY), and 179 to 185 (NTNSGRK).

It belongs to the SeqA family. As to quaternary structure, homodimer. Polymerizes to form helical filaments.

The protein localises to the cytoplasm. Functionally, negative regulator of replication initiation, which contributes to regulation of DNA replication and ensures that replication initiation occurs exactly once per chromosome per cell cycle. Binds to pairs of hemimethylated GATC sequences in the oriC region, thus preventing assembly of replication proteins and re-initiation at newly replicated origins. Repression is relieved when the region becomes fully methylated. The polypeptide is Negative modulator of initiation of replication (Haemophilus parainfluenzae (strain T3T1)).